Reading from the N-terminus, the 44-residue chain is Large ribosomal subunit protein bL34 (44 aa).

The interval 1 to 26 is disordered; the sequence is MKMTFQPKKRQRAKVHGFRQRMKTAG. Positions 7-22 are enriched in basic residues; that stretch reads PKKRQRAKVHGFRQRM.

This sequence belongs to the bacterial ribosomal protein bL34 family.

This is Large ribosomal subunit protein bL34 from Agathobacter rectalis (strain ATCC 33656 / DSM 3377 / JCM 17463 / KCTC 5835 / VPI 0990) (Eubacterium rectale).